The following is a 666-amino-acid chain: UvrABC system protein B (666 aa).

The Helicase ATP-binding domain occupies 25 to 412; the sequence is NGIKNNNKWQ…SENIAEQVIR (388 aa). 38–45 lines the ATP pocket; the sequence is GVTGSGKT. Residues 91-114 carry the Beta-hairpin motif; that stretch reads YYDYYQPEAYVAQTDTYIEKDASI. The Helicase C-terminal domain occupies 429–595; the sequence is QIDDLYSEIK…TIKKAVRDVI (167 aa). Residues 622–657 enclose the UVR domain; sequence DKLIKEFEKEMKEAAKELQFEKAAYFRDKVNELKKK.

The protein belongs to the UvrB family. As to quaternary structure, forms a heterotetramer with UvrA during the search for lesions. Interacts with UvrC in an incision complex.

Its subcellular location is the cytoplasm. Functionally, the UvrABC repair system catalyzes the recognition and processing of DNA lesions. A damage recognition complex composed of 2 UvrA and 2 UvrB subunits scans DNA for abnormalities. Upon binding of the UvrA(2)B(2) complex to a putative damaged site, the DNA wraps around one UvrB monomer. DNA wrap is dependent on ATP binding by UvrB and probably causes local melting of the DNA helix, facilitating insertion of UvrB beta-hairpin between the DNA strands. Then UvrB probes one DNA strand for the presence of a lesion. If a lesion is found the UvrA subunits dissociate and the UvrB-DNA preincision complex is formed. This complex is subsequently bound by UvrC and the second UvrB is released. If no lesion is found, the DNA wraps around the other UvrB subunit that will check the other stand for damage. The protein is UvrABC system protein B of Clostridium acetobutylicum (strain ATCC 824 / DSM 792 / JCM 1419 / IAM 19013 / LMG 5710 / NBRC 13948 / NRRL B-527 / VKM B-1787 / 2291 / W).